We begin with the raw amino-acid sequence, 198 residues long: Peptidyl-tRNA hydrolase (198 aa).

Y15 contacts tRNA. The Proton acceptor role is filled by H20. The tRNA site is built by F66, N68, and N114.

This sequence belongs to the PTH family. As to quaternary structure, monomer.

The protein localises to the cytoplasm. The enzyme catalyses an N-acyl-L-alpha-aminoacyl-tRNA + H2O = an N-acyl-L-amino acid + a tRNA + H(+). Its function is as follows. Hydrolyzes ribosome-free peptidyl-tRNAs (with 1 or more amino acids incorporated), which drop off the ribosome during protein synthesis, or as a result of ribosome stalling. Catalyzes the release of premature peptidyl moieties from peptidyl-tRNA molecules trapped in stalled 50S ribosomal subunits, and thus maintains levels of free tRNAs and 50S ribosomes. In Cupriavidus necator (strain ATCC 17699 / DSM 428 / KCTC 22496 / NCIMB 10442 / H16 / Stanier 337) (Ralstonia eutropha), this protein is Peptidyl-tRNA hydrolase.